Consider the following 281-residue polypeptide: UPF0750 membrane protein YvjA (281 aa).

A run of 5 helical transmembrane segments spans residues Tyr-14 to Pro-34, Ala-56 to Gly-76, Gly-77 to Thr-97, Leu-108 to Gly-128, and Ser-149 to Phe-169.

This sequence belongs to the UPF0750 family.

The protein resides in the cell membrane. This is UPF0750 membrane protein YvjA (yvjA) from Bacillus subtilis (strain 168).